The following is an 89-amino-acid chain: Large ribosomal subunit protein eL43 (89 aa).

Residues Met1–Ile28 form a disordered region. The C4-type zinc-finger motif lies at Cys38–Cys59.

Belongs to the eukaryotic ribosomal protein eL43 family. Requires Zn(2+) as cofactor.

This chain is Large ribosomal subunit protein eL43, found in Methanosphaera stadtmanae (strain ATCC 43021 / DSM 3091 / JCM 11832 / MCB-3).